The primary structure comprises 100 residues: Large ribosomal subunit protein eL31 (100 aa).

The protein belongs to the eukaryotic ribosomal protein eL31 family.

This chain is Large ribosomal subunit protein eL31, found in Hyperthermus butylicus (strain DSM 5456 / JCM 9403 / PLM1-5).